We begin with the raw amino-acid sequence, 365 residues long: Aminomethyltransferase (365 aa).

This sequence belongs to the GcvT family. As to quaternary structure, the glycine cleavage system is composed of four proteins: P, T, L and H.

It catalyses the reaction N(6)-[(R)-S(8)-aminomethyldihydrolipoyl]-L-lysyl-[protein] + (6S)-5,6,7,8-tetrahydrofolate = N(6)-[(R)-dihydrolipoyl]-L-lysyl-[protein] + (6R)-5,10-methylene-5,6,7,8-tetrahydrofolate + NH4(+). The glycine cleavage system catalyzes the degradation of glycine. In Serratia proteamaculans (strain 568), this protein is Aminomethyltransferase.